Reading from the N-terminus, the 282-residue chain is 4-diphosphocytidyl-2-C-methyl-D-erythritol kinase (282 aa).

Residue lysine 9 is part of the active site. Residue 98 to 108 coordinates ATP; that stretch reads PMGGGLGGGSS. Residue aspartate 140 is part of the active site.

The protein belongs to the GHMP kinase family. IspE subfamily. In terms of assembly, homodimer.

It carries out the reaction 4-CDP-2-C-methyl-D-erythritol + ATP = 4-CDP-2-C-methyl-D-erythritol 2-phosphate + ADP + H(+). Its pathway is isoprenoid biosynthesis; isopentenyl diphosphate biosynthesis via DXP pathway; isopentenyl diphosphate from 1-deoxy-D-xylulose 5-phosphate: step 3/6. Functionally, catalyzes the phosphorylation of the position 2 hydroxy group of 4-diphosphocytidyl-2C-methyl-D-erythritol. The chain is 4-diphosphocytidyl-2-C-methyl-D-erythritol kinase from Salmonella heidelberg (strain SL476).